A 370-amino-acid chain; its full sequence is Putative FBD-associated F-box protein At1g50980 (370 aa).

The region spanning 31–77 (IRTISEFPDKVLLKILSLLPSKDVVATGVLSKRWRSLWKDVKTFRTS) is the F-box domain. One can recognise an FBD domain in the interval 292–343 (LMGNQPDLIPKSLSSHLEILEWRQYNDTAQEREAAKYILANASGLRKATFYT).

This Arabidopsis thaliana (Mouse-ear cress) protein is Putative FBD-associated F-box protein At1g50980.